We begin with the raw amino-acid sequence, 339 residues long: 4-hydroxy-2-oxovalerate aldolase (339 aa).

One can recognise a Pyruvate carboxyltransferase domain in the interval 7-257 (IRIMDTTLRD…QVGVDLYKIM (251 aa)). Residue 15–16 (RD) coordinates substrate. Aspartate 16 is a Mn(2+) binding site. The Proton acceptor role is filled by histidine 19. Residues serine 169 and histidine 196 each coordinate substrate. Mn(2+) contacts are provided by histidine 196 and histidine 198. Residue tyrosine 286 participates in substrate binding.

Belongs to the 4-hydroxy-2-oxovalerate aldolase family.

It catalyses the reaction (S)-4-hydroxy-2-oxopentanoate = acetaldehyde + pyruvate. In Pelotomaculum thermopropionicum (strain DSM 13744 / JCM 10971 / SI), this protein is 4-hydroxy-2-oxovalerate aldolase.